The sequence spans 337 residues: Holliday junction branch migration complex subunit RuvB (337 aa).

Positions 4–185 are large ATPase domain (RuvB-L); it reads ADRLISNSFE…FGITQRLEYY (182 aa). ATP contacts are provided by residues I24, R25, G66, K69, T70, T71, 132-134, R175, Y185, and R222; that span reads EDY. T70 lines the Mg(2+) pocket. Residues 186 to 256 form a small ATPAse domain (RuvB-S) region; that stretch reads KVDDLKDIVQ…TAKKALDMLD (71 aa). The interval 259 to 337 is head domain (RuvB-H); that stretch reads SSGFDYMDRK…HFGLDIPEAR (79 aa). DNA contacts are provided by R314 and R319.

The protein belongs to the RuvB family. In terms of assembly, homohexamer. Forms an RuvA(8)-RuvB(12)-Holliday junction (HJ) complex. HJ DNA is sandwiched between 2 RuvA tetramers; dsDNA enters through RuvA and exits via RuvB. An RuvB hexamer assembles on each DNA strand where it exits the tetramer. Each RuvB hexamer is contacted by two RuvA subunits (via domain III) on 2 adjacent RuvB subunits; this complex drives branch migration. In the full resolvosome a probable DNA-RuvA(4)-RuvB(12)-RuvC(2) complex forms which resolves the HJ.

It is found in the cytoplasm. It carries out the reaction ATP + H2O = ADP + phosphate + H(+). In terms of biological role, the RuvA-RuvB-RuvC complex processes Holliday junction (HJ) DNA during genetic recombination and DNA repair, while the RuvA-RuvB complex plays an important role in the rescue of blocked DNA replication forks via replication fork reversal (RFR). RuvA specifically binds to HJ cruciform DNA, conferring on it an open structure. The RuvB hexamer acts as an ATP-dependent pump, pulling dsDNA into and through the RuvAB complex. RuvB forms 2 homohexamers on either side of HJ DNA bound by 1 or 2 RuvA tetramers; 4 subunits per hexamer contact DNA at a time. Coordinated motions by a converter formed by DNA-disengaged RuvB subunits stimulates ATP hydrolysis and nucleotide exchange. Immobilization of the converter enables RuvB to convert the ATP-contained energy into a lever motion, pulling 2 nucleotides of DNA out of the RuvA tetramer per ATP hydrolyzed, thus driving DNA branch migration. The RuvB motors rotate together with the DNA substrate, which together with the progressing nucleotide cycle form the mechanistic basis for DNA recombination by continuous HJ branch migration. Branch migration allows RuvC to scan DNA until it finds its consensus sequence, where it cleaves and resolves cruciform DNA. This Photobacterium profundum (strain SS9) protein is Holliday junction branch migration complex subunit RuvB.